Here is a 1179-residue protein sequence, read N- to C-terminus: MIKIITGRQSDPLQTEIIGRAARNYLAQPGKDTFIIVPNHIKFNTEVSAIGKVAQLQGREETSVKNLHVLSFSRLAWFFFKKADLLMPESLDDAAATMILEQIIDKRRDELLLFKNSHANSGMIKQVYSTILQVHTGQLDLGNLLERAADPAVALDLDNETRDKLHDLDLIYQDFLEIVSEKHFATKDELNIQLNQLLASRPDLVSQASFYVTDFSHFSIQEKMTMQLLAAFASEMTFAFKTADGSVIEPAAGEYDYVVQKTIKDLTGYFSAHDFAWEREKIASPASPARDLNQAWQGQGQPDLNNLQLVKADSRYAEAYFVARTIYDEVALKGCQYRDFLVLAPNLQEYETYLAPILRQNQIPFFDDLQQQMKYHPLVLLLENLGKLLQQAGDTPALLSIMKTRLLIPDWYLEGDAEAGEAAYLRDIDQLENFALAHGIKYSLWQKPLKDFTKAQVIALDQEQYQKWLDRLDKLRDFFVSKISRLARQLKSEKDSMTAVKLFFDFLVKNGVSARLEAWRLKASESGDLQQAQQPEQCWNLLLSLLKDYLLVNPENFAWADFFKMLTAAFSQANFATIPASLDAVTLSEYGMVQTSGYKQVFIIGAANGSLPQINDQPNFLTTENLASLADFFDQDAYLEDSQQLRNLDQEYQFGNALALASDRVYISYPVINSNNDLLDPSIYYKRLLKLVNGREYRQRDLPDIAEKDRTEFARQLLLFLTSPRASLGYLAYAEENSAQSPLVAKLVELSRQYEEEKAEEIAEGMAYDNNPQDISEDLAERLYGKDLLSSVSQLESYYQNSFEYFLNYGLRLRPRAENELNAIQSGNYFHRTFELLLKEMQKKNIEIDKLSELDLELLLKQVRSEILQEPLYQQFLRDPFNEYLFKVFDKTTSKVAQSYRRKQQENKMRATYGELAFGPAEKLAGLVLPLKKFAGQRKISLRGKIDRVDLFNGDQHVLGQLIDYKSSDHSFNLARFASGVDLQMIAYLDVLEKNRDLLAGGRQFDLLGAFYQYVTRKLNSVNSSSTGALFDSKLQLKENLLGGEDKLKLSGVFVSEPAWYQEVDKALEKKATSSVYRGLKLNKSGGFGKKDNFFSQDEMRELLEYVEALIEDAASEILSGQIALNPFRQGNNTGLAFSDYKDIFYFDQQLPTNSYRDLPNLKKADLLALVEKRLRQRE.

Belongs to the helicase family. AddB/RexB type 2 subfamily. Heterodimer of AddA and RexB. Mg(2+) is required as a cofactor.

In terms of biological role, the heterodimer acts as both an ATP-dependent DNA helicase and an ATP-dependent, dual-direction single-stranded exonuclease. Recognizes the chi site generating a DNA molecule suitable for the initiation of homologous recombination. This subunit has 5' -&gt; 3' nuclease activity but not helicase activity. The polypeptide is ATP-dependent helicase/deoxyribonuclease subunit B (Lactobacillus delbrueckii subsp. bulgaricus (strain ATCC BAA-365 / Lb-18)).